Consider the following 88-residue polypeptide: Small ribosomal subunit protein bS20 (88 aa).

It belongs to the bacterial ribosomal protein bS20 family.

In terms of biological role, binds directly to 16S ribosomal RNA. This Syntrophomonas wolfei subsp. wolfei (strain DSM 2245B / Goettingen) protein is Small ribosomal subunit protein bS20.